The primary structure comprises 178 residues: Ribosome maturation factor RimM (178 aa).

A PRC barrel domain is found at threonine 101–phenylalanine 178.

Belongs to the RimM family. In terms of assembly, binds ribosomal protein uS19.

Its subcellular location is the cytoplasm. An accessory protein needed during the final step in the assembly of 30S ribosomal subunit, possibly for assembly of the head region. Essential for efficient processing of 16S rRNA. May be needed both before and after RbfA during the maturation of 16S rRNA. It has affinity for free ribosomal 30S subunits but not for 70S ribosomes. This is Ribosome maturation factor RimM from Pseudomonas entomophila (strain L48).